We begin with the raw amino-acid sequence, 447 residues long: Tubulin beta chain (447 aa).

8 residues coordinate GTP: Gln-11, Glu-69, Ser-138, Gly-142, Thr-143, Gly-144, Asn-204, and Asn-226. Glu-69 is a Mg(2+) binding site. The disordered stretch occupies residues 424–447; sequence QYQEASVSEGEEEYDEEAPLEGEE. Positions 432–447 are enriched in acidic residues; sequence EGEEEYDEEAPLEGEE.

This sequence belongs to the tubulin family. As to quaternary structure, dimer of alpha and beta chains. A typical microtubule is a hollow water-filled tube with an outer diameter of 25 nm and an inner diameter of 15 nM. Alpha-beta heterodimers associate head-to-tail to form protofilaments running lengthwise along the microtubule wall with the beta-tubulin subunit facing the microtubule plus end conferring a structural polarity. Microtubules usually have 13 protofilaments but different protofilament numbers can be found in some organisms and specialized cells. Requires Mg(2+) as cofactor.

It is found in the cytoplasm. The protein localises to the cytoskeleton. Tubulin is the major constituent of microtubules, a cylinder consisting of laterally associated linear protofilaments composed of alpha- and beta-tubulin heterodimers. Microtubules grow by the addition of GTP-tubulin dimers to the microtubule end, where a stabilizing cap forms. Below the cap, tubulin dimers are in GDP-bound state, owing to GTPase activity of alpha-tubulin. In Venturia inaequalis (Apple scab fungus), this protein is Tubulin beta chain.